We begin with the raw amino-acid sequence, 275 residues long: Uroporphyrinogen-III synthase (275 aa).

It belongs to the uroporphyrinogen-III synthase family.

The catalysed reaction is hydroxymethylbilane = uroporphyrinogen III + H2O. It participates in porphyrin-containing compound metabolism; protoporphyrin-IX biosynthesis; coproporphyrinogen-III from 5-aminolevulinate: step 3/4. Functionally, catalyzes cyclization of the linear tetrapyrrole, hydroxymethylbilane, to the macrocyclic uroporphyrinogen III, the fourth step in the heme biosynthetic pathway. In Saccharomyces cerevisiae (strain ATCC 204508 / S288c) (Baker's yeast), this protein is Uroporphyrinogen-III synthase.